A 141-amino-acid chain; its full sequence is Proteasome maturation protein (141 aa).

A Glycyl lysine isopeptide (Lys-Gly) (interchain with G-Cter in SUMO2) cross-link involves residue Lys-39. Residues 68–72 (RNIQG) carry the High-affinity association with the preproteasome motif.

Belongs to the POMP/UMP1 family. In terms of assembly, constituent of preproteasomes, but not of mature 20S proteasomes. Within the preproteasome, may directly interact with PSMB1/beta6, PSMB4/beta7, PSMB5/beta5, PSMB6/beta1 and PSMB9/beta1i. Interaction with PSMB8/beta5i has been observed in PubMed:10973495, but not in PubMed:10926487. Forms tetramers. As to expression, strongly expressed from the basal layer to the granular layer of healthy epidermis, whereas in KLICK patients there is a gradual decrease of expression toward the granular layer.

It localises to the cytoplasm. It is found in the cytosol. Its subcellular location is the nucleus. The protein resides in the microsome membrane. Its function is as follows. Molecular chaperone essential for the assembly of standard proteasomes and immunoproteasomes. Degraded after completion of proteasome maturation. Mediates the association of 20S preproteasome with the endoplasmic reticulum. This chain is Proteasome maturation protein, found in Homo sapiens (Human).